The chain runs to 439 residues: Taxadien-5-alpha-ol O-acetyltransferase (439 aa).

Residues His164 and Asp373 each act as proton acceptor in the active site.

This sequence belongs to the plant acyltransferase family.

It catalyses the reaction taxa-4(20),11-dien-5alpha-ol + acetyl-CoA = taxa-4(20),11-dien-5alpha-yl acetate + CoA. It functions in the pathway alkaloid biosynthesis; taxol biosynthesis; 10-deacetyl-2-debenzoylbaccatin III from taxa-4(20),11-dien-5alpha-ol: step 1/3. The polypeptide is Taxadien-5-alpha-ol O-acetyltransferase (TAT) (Taxus cuspidata (Japanese yew)).